Reading from the N-terminus, the 435-residue chain is Cyclin-dependent kinase 14 (435 aa).

Residues 75–92 (RTQSSFDPFEKTSNQPTS) show a composition bias toward polar residues. A disordered region spans residues 75–97 (RTQSSFDPFEKTSNQPTSPKFGK). One can recognise a Protein kinase domain in the interval 101-385 (YEKLEKLGEG…AQAALNHDYF (285 aa)). ATP contacts are provided by residues 107–115 (LGEGSYATV) and Lys-130. Asp-222 serves as the catalytic Proton acceptor.

Belongs to the protein kinase superfamily. CMGC Ser/Thr protein kinase family. CDC2/CDKX subfamily. As to quaternary structure, interacts with ccny; ccny mediates its recruitment to the plasma membrane and promotes phosphorylation of lrp6.

It is found in the cell membrane. It carries out the reaction L-seryl-[protein] + ATP = O-phospho-L-seryl-[protein] + ADP + H(+). The enzyme catalyses L-threonyl-[protein] + ATP = O-phospho-L-threonyl-[protein] + ADP + H(+). Serine/threonine-protein kinase involved in the control of the eukaryotic cell cycle, whose activity is controlled by an associated cyclin. Acts as a cell-cycle regulator of Wnt signaling pathway during G2/M phase by mediating the phosphorylation of lrp6, leading to the activation of the Wnt signaling pathway. The sequence is that of Cyclin-dependent kinase 14 (cdk14) from Xenopus laevis (African clawed frog).